A 92-amino-acid polypeptide reads, in one-letter code: Protein LSO2 (92 aa).

Basic and acidic residues-rich tracts occupy residues Met-1–Ala-10 and Glu-38–Ala-72. Residues Met-1–Lys-92 are disordered. Positions Ala-17 to Gln-80 form a coiled coil.

Belongs to the CCDC124 family. As to quaternary structure, associates with translationally inactive ribosomes in the nonrotated state. LSO2 bridges the decoding sites of the small with the GTPase activating center (GAC) of the large subunit. This position allows accommodation of the DOM34-dependent ribosome recycling system, which splits LSO2-containing ribosomes.

The protein localises to the nucleus. Its subcellular location is the cytoplasm. Its function is as follows. Ribosome-binding protein involved in ribosome hibernation by associating with translationally inactive ribosomes. Required for translational recovery after starvation from stationary phase. May facilitate rapid translation reactivation by stabilizing the recycling-competent state of inactive ribosomes. The protein is Protein LSO2 of Saccharomyces cerevisiae (strain ATCC 204508 / S288c) (Baker's yeast).